Reading from the N-terminus, the 642-residue chain is Threonine--tRNA ligase (642 aa).

The TGS domain maps to 1–61 (MIKVTFPDGN…EHDGKLQLLT (61 aa)). Residues 240 to 539 (DHRKIGKDLD…LIEEYKGSFP (300 aa)) are catalytic. Zn(2+) contacts are provided by Cys-334, His-385, and His-516.

It belongs to the class-II aminoacyl-tRNA synthetase family. As to quaternary structure, homodimer. Zn(2+) is required as a cofactor.

The protein resides in the cytoplasm. The catalysed reaction is tRNA(Thr) + L-threonine + ATP = L-threonyl-tRNA(Thr) + AMP + diphosphate + H(+). Its function is as follows. Catalyzes the attachment of threonine to tRNA(Thr) in a two-step reaction: L-threonine is first activated by ATP to form Thr-AMP and then transferred to the acceptor end of tRNA(Thr). Also edits incorrectly charged L-seryl-tRNA(Thr). The protein is Threonine--tRNA ligase of Acholeplasma laidlawii (strain PG-8A).